We begin with the raw amino-acid sequence, 90 residues long: Small ribosomal subunit protein uS15c (90 aa).

Belongs to the universal ribosomal protein uS15 family. In terms of assembly, part of the 30S ribosomal subunit.

The protein localises to the plastid. Its subcellular location is the chloroplast. This is Small ribosomal subunit protein uS15c (rps15) from Panax ginseng (Korean ginseng).